The primary structure comprises 508 residues: Galactose-1-phosphate uridylyltransferase (508 aa).

This sequence belongs to the galactose-1-phosphate uridylyltransferase type 2 family.

It is found in the cytoplasm. The enzyme catalyses alpha-D-galactose 1-phosphate + UDP-alpha-D-glucose = alpha-D-glucose 1-phosphate + UDP-alpha-D-galactose. It participates in carbohydrate metabolism; galactose metabolism. The protein is Galactose-1-phosphate uridylyltransferase (galT) of Halalkalibacterium halodurans (strain ATCC BAA-125 / DSM 18197 / FERM 7344 / JCM 9153 / C-125) (Bacillus halodurans).